A 349-amino-acid chain; its full sequence is N-acetyltaurine hydrolase (349 aa).

The a divalent metal cation site is built by H26, H28, E169, H201, H230, and D298.

The protein belongs to the metallo-dependent hydrolases superfamily. Phosphotriesterase family. The cofactor is a divalent metal cation.

The protein resides in the cytoplasm. Its subcellular location is the cytosol. The catalysed reaction is N-acetyltaurine + H2O = taurine + acetate. It carries out the reaction N-propanoyltaurine + H2O = propanoate + taurine. It catalyses the reaction N-acetyl-L-methionine + H2O = L-methionine + acetate. The enzyme catalyses N-acetyl-L-isoleucine + H2O = L-isoleucine + acetate. The catalysed reaction is N-acetyl-L-leucine + H2O = L-leucine + acetate. It carries out the reaction N-acetyl-L-valine + H2O = L-valine + acetate. Its function is as follows. N-acetyltaurine hydrolase that regulates feeding by catalyzing the hydrolysis of N-acetyltaurine into taurine and acetate. N-acetyltaurine has anorexigenic and anti-obesity effects that are dependent on GFRAL receptor and GDF15. PTER also acts on other N-acetyl amino acids (Met, Ile, Leu, Val) and N-propionyltaurine, but at lower rates. This chain is N-acetyltaurine hydrolase, found in Pongo abelii (Sumatran orangutan).